Consider the following 1979-residue polypeptide: E3 ubiquitin-protein ligase TTC3 (1979 aa).

The tract at residues M1 to Q230 is interaction with POLG. 2 TPR repeats span residues G231–N264 and L266–W298. Residue S378 is modified to Phosphoserine. Residues C422–E457 are disordered. TPR repeat units lie at residues V536–E572 and C576–L609. Positions L783 to Q811 are disordered. S1009 is modified (phosphoserine). 7 disordered regions span residues N1021 to A1067, Q1214 to K1289, Q1402 to S1427, K1574 to T1601, M1757 to T1776, K1788 to S1821, and D1873 to D1927. Positions V1036–V1050 are enriched in low complexity. A Phosphoserine modification is found at S1060. The span at Q1214–K1227 shows a compositional bias: basic and acidic residues. The segment covering D1248–S1257 has biased composition (low complexity). The segment covering D1576–P1586 has biased composition (basic and acidic residues). Polar residues-rich tracts occupy residues K1788 to S1799 and G1808 to S1821. S1794 is subject to Phosphoserine. The segment covering D1873 to E1890 has biased composition (basic and acidic residues). The segment at C1931–G1971 adopts an RING-type; atypical zinc-finger fold.

As to quaternary structure, interacts (when phosphorylated on Ser-378) with AKT1, AKT2 and AKT3 (when phosphorylated). Interacts with CIT. Interacts with POLG. Interacts with HSP70. Interacts with SMURF2. Phosphorylation on Ser-378 by Akt is required for ubiquitin ligase activity. In terms of processing, proteolytically cleaved into differently sized N- and C-terminal fragments.

The protein resides in the nucleus. The protein localises to the cytoplasm. Its subcellular location is the golgi apparatus. The catalysed reaction is S-ubiquitinyl-[E2 ubiquitin-conjugating enzyme]-L-cysteine + [acceptor protein]-L-lysine = [E2 ubiquitin-conjugating enzyme]-L-cysteine + N(6)-ubiquitinyl-[acceptor protein]-L-lysine.. It participates in protein modification; protein ubiquitination. Functionally, E3 ubiquitin-protein ligase which catalyzes the formation of 'Lys-48'-polyubiquitin chains. Mediates the ubiquitination and subsequent degradation of phosphorylated Akt (AKT1, AKT2 and AKT3) in the nucleus. Acts as a terminal regulator of Akt signaling after activation; its phosphorylation by Akt, which is a prerequisite for ubiquitin ligase activity, suggests the existence of a regulation mechanism required to control Akt levels after activation. Positively regulates TGFB1-induced epithelial-mesenchymal transition and myofibroblast differentiation by mediating the ubiquitination and subsequent degradation of SMURF2. Regulates neuronal differentiation by regulating actin remodeling and Golgi organization via a signaling cascade involving RHOA, CIT and ROCK. Inhibits cell proliferation. The sequence is that of E3 ubiquitin-protein ligase TTC3 (Ttc3) from Mus musculus (Mouse).